The sequence spans 522 residues: Acetylcholine receptor subunit delta (522 aa).

Positions 1-21 are cleaved as a signal peptide; the sequence is MGNIHFVYLLISCLYYSGCSG. The Extracellular segment spans residues 22 to 245; the sequence is VNEEERLIND…VTFYLIIRRK (224 aa). Residues Asn91, Asn164, and Asn229 are each glycosylated (N-linked (GlcNAc...) asparagine). A disulfide bond links Cys151 and Cys165. The next 3 membrane-spanning stretches (helical) occupy residues 246–270, 278–295, and 312–333; these read PLFY…AFYL, MSTA…LLLT, and YLMF…VLNF. The Cytoplasmic segment spans residues 334–476; the sequence is HFRTPSTHVL…WNLVGQTIDR (143 aa). A Phosphotyrosine; by Tyr-kinases modification is found at Tyr393. Residues 477 to 497 form a helical membrane-spanning segment; it reads LSMFIITPVMVLGTIFIFVMG.

The protein belongs to the ligand-gated ion channel (TC 1.A.9) family. Acetylcholine receptor (TC 1.A.9.1) subfamily. Pentamer of two alpha chains, and one each of the beta, delta, and gamma chains.

The protein resides in the postsynaptic cell membrane. Its subcellular location is the cell membrane. The enzyme catalyses K(+)(in) = K(+)(out). It catalyses the reaction Na(+)(in) = Na(+)(out). In terms of biological role, after binding acetylcholine, the AChR responds by an extensive change in conformation that affects all subunits and leads to opening of an ion-conducting channel across the plasma membrane. This chain is Acetylcholine receptor subunit delta (chrnd), found in Tetronarce californica (Pacific electric ray).